The sequence spans 91 residues: Elongation factor 1-beta (91 aa).

It belongs to the EF-1-beta/EF-1-delta family.

Functionally, promotes the exchange of GDP for GTP in EF-1-alpha/GDP, thus allowing the regeneration of EF-1-alpha/GTP that could then be used to form the ternary complex EF-1-alpha/GTP/AAtRNA. The sequence is that of Elongation factor 1-beta from Pyrococcus furiosus (strain ATCC 43587 / DSM 3638 / JCM 8422 / Vc1).